Consider the following 304-residue polypeptide: Probable porphobilinogen deaminase (304 aa).

Residue cysteine 240 is modified to S-(dipyrrolylmethanemethyl)cysteine.

This sequence belongs to the HMBS family. Dipyrromethane serves as cofactor.

The catalysed reaction is 4 porphobilinogen + H2O = hydroxymethylbilane + 4 NH4(+). It functions in the pathway porphyrin-containing compound metabolism; protoporphyrin-IX biosynthesis; coproporphyrinogen-III from 5-aminolevulinate: step 2/4. In terms of biological role, tetrapolymerization of the monopyrrole PBG into the hydroxymethylbilane pre-uroporphyrinogen in several discrete steps. The protein is Probable porphobilinogen deaminase of Ignicoccus hospitalis (strain KIN4/I / DSM 18386 / JCM 14125).